We begin with the raw amino-acid sequence, 367 residues long: Methylated-thiol--coenzyme M methyltransferase (367 aa).

Zn(2+)-binding residues include H236, C238, and C313.

It belongs to the uroporphyrinogen decarboxylase family. In terms of assembly, homodimer. The cofactor is Zn(2+).

It catalyses the reaction methanethiol + coenzyme M = methyl-coenzyme M + hydrogen sulfide + H(+). Its function is as follows. Methyltransferase involved in methanogenesis from methylated-thiols. Catalyzes two successive steps: mediates the transfer of a methyl group from the substrate to the cobalt cofactor of a methylated-thiol-specific corrinoid protein (MtsB), and the subsequent transfer of the methyl group from the corrinoid protein to coenzyme M. The sequence is that of Methylated-thiol--coenzyme M methyltransferase (mtsA) from Methanosarcina mazei (strain ATCC BAA-159 / DSM 3647 / Goe1 / Go1 / JCM 11833 / OCM 88) (Methanosarcina frisia).